The chain runs to 156 residues: MSRRHSAEKREVLPDPKFGNVVITKFMNSVMYAGKKSVAEGIVYGALDLIEAKTRQGPLTVFEQALENVMPTIEVRSRRVGGATYQVPVEVRSTRRQALGIRWLIAAARGRNEKTMTERLSAELLDASNNRGSAVKKREDVHKMAEANRAFSHYRW.

The protein belongs to the universal ribosomal protein uS7 family. Part of the 30S ribosomal subunit. Contacts proteins S9 and S11.

In terms of biological role, one of the primary rRNA binding proteins, it binds directly to 16S rRNA where it nucleates assembly of the head domain of the 30S subunit. Is located at the subunit interface close to the decoding center, probably blocks exit of the E-site tRNA. This Nitrobacter hamburgensis (strain DSM 10229 / NCIMB 13809 / X14) protein is Small ribosomal subunit protein uS7.